Here is a 565-residue protein sequence, read N- to C-terminus: uncharacterized protein (565 aa).

The next 13 membrane-spanning stretches (helical) occupy residues 8 to 28, 43 to 63, 95 to 115, 137 to 157, 167 to 187, 227 to 247, 268 to 288, 314 to 334, 367 to 387, 424 to 444, 460 to 480, 482 to 502, and 516 to 536; these read ISFI…GIFF, LAIF…LALI, MTYL…ICSI, WLIW…IPPL, MVVS…GFIV, FTGI…FFAY, WALF…AVAL, IVFG…INGF, VVGV…FTVI, ATWT…GAIV, FLPA…VTII, PFIN…TVLG, and VMLI…VYVE.

It to M.pneumoniae MPN_095 and MPN_096.

It is found in the cell membrane. This is an uncharacterized protein from Mycoplasma pneumoniae (strain ATCC 29342 / M129 / Subtype 1) (Mycoplasmoides pneumoniae).